We begin with the raw amino-acid sequence, 198 residues long: C4b-binding protein beta chain (198 aa).

The first 17 residues, 1-17 (MFFWLMCYLVDVWLISA), serve as a signal peptide directing secretion. Positions 22 to 77 (HCPDPLLVTDEFSSLEPVNVNDTFMFKCNEHCIFKGSNWSQCRENHTRVTHSPVSK) constitute a Sushi 1; atypical; lacks a Cys domain. 3 N-linked (GlcNAc...) asparagine glycosylation sites follow: Asn42, Asn59, and Asn66. A Sushi 2 domain is found at 79–135 (RDCGPPETPTHGYFEGRDFKSGSTITYYCEARYRLVGTQHQQCIDGEWTSAPPICEL). 2 cysteine pairs are disulfide-bonded: Cys81/Cys121 and Cys107/Cys133.

As to quaternary structure, disulfide-linked complex of alpha and beta chains.

The protein localises to the secreted. Its function is as follows. Controls the classical pathway of complement activation. It binds as a cofactor to C3b/C4b inactivator (C3bINA), which then hydrolyzes the complement fragment C4b. It also accelerates the degradation of the C4bC2a complex (C3 convertase) by dissociating the complement fragment C2a. It also interacts with serum amyloid P component. This is C4b-binding protein beta chain (C4BPB) from Bos taurus (Bovine).